Consider the following 426-residue polypeptide: Kelch repeat-containing protein At3g27220 (426 aa).

The helical transmembrane segment at 18–38 (LMLVLYFTSVLGIGFIAAFLC) threads the bilayer. Kelch repeat units follow at residues 123–170 (LLYV…IVTD), 173–222 (YVYV…IWRG), 224–275 (LHVM…VAND), 276–338 (KLLV…WIIV), and 341–394 (SIVI…FWNG).

It is found in the membrane. The protein is Kelch repeat-containing protein At3g27220 of Arabidopsis thaliana (Mouse-ear cress).